The primary structure comprises 771 residues: Probable aconitate hydratase, mitochondrial (771 aa).

Substrate contacts are provided by residues Gln-86 and 179 to 181 (DSH). 3 residues coordinate [4Fe-4S] cluster: Cys-372, Cys-435, and Cys-438. Substrate-binding positions include Arg-461, Arg-466, Arg-594, and 657-658 (SR).

This sequence belongs to the aconitase/IPM isomerase family. In terms of assembly, monomer. [4Fe-4S] cluster is required as a cofactor.

It is found in the mitochondrion. The catalysed reaction is citrate = D-threo-isocitrate. Its pathway is carbohydrate metabolism; tricarboxylic acid cycle; isocitrate from oxaloacetate: step 2/2. Catalyzes the isomerization of citrate to isocitrate via cis-aconitate. This is Probable aconitate hydratase, mitochondrial (aco2) from Dictyostelium discoideum (Social amoeba).